We begin with the raw amino-acid sequence, 110 residues long: Small ribosomal subunit protein eS25 (110 aa).

Residues 1–37 form a disordered region; the sequence is MGGASKKPISTMEKRLKKEAEKQQKAEEKKKGPSKTG. A compositionally biased stretch (basic and acidic residues) spans 12–37; the sequence is MEKRLKKEAEKQQKAEEKKKGPSKTG.

It belongs to the eukaryotic ribosomal protein eS25 family.

This is Small ribosomal subunit protein eS25 (rps25e) from Saccharolobus solfataricus (strain ATCC 35092 / DSM 1617 / JCM 11322 / P2) (Sulfolobus solfataricus).